We begin with the raw amino-acid sequence, 175 residues long: Adenine phosphoribosyltransferase (175 aa).

The protein belongs to the purine/pyrimidine phosphoribosyltransferase family. In terms of assembly, homodimer.

The protein resides in the cytoplasm. It catalyses the reaction AMP + diphosphate = 5-phospho-alpha-D-ribose 1-diphosphate + adenine. It functions in the pathway purine metabolism; AMP biosynthesis via salvage pathway; AMP from adenine: step 1/1. Catalyzes a salvage reaction resulting in the formation of AMP, that is energically less costly than de novo synthesis. This is Adenine phosphoribosyltransferase from Francisella tularensis subsp. holarctica (strain FTNF002-00 / FTA).